Here is a 309-residue protein sequence, read N- to C-terminus: Glycine--tRNA ligase alpha subunit (309 aa).

The protein belongs to the class-II aminoacyl-tRNA synthetase family. Tetramer of two alpha and two beta subunits.

It is found in the cytoplasm. It carries out the reaction tRNA(Gly) + glycine + ATP = glycyl-tRNA(Gly) + AMP + diphosphate. In Anaeromyxobacter sp. (strain K), this protein is Glycine--tRNA ligase alpha subunit.